The primary structure comprises 241 residues: B-cell receptor-associated protein 29 (241 aa).

The Lumenal segment spans residues 1–6; sequence MTLQWA. The helical transmembrane segment at 7 to 27 threads the bilayer; the sequence is AVATFLYAEIGLILIFCLPFI. The Cytoplasmic portion of the chain corresponds to 28-43; the sequence is PPQRWQKIFSFNVWGK. The chain crosses the membrane as a helical span at residues 44-64; it reads IATFWNKAFLTIIILLIVLFL. The Lumenal segment spans residues 65 to 103; it reads DAVREVRKYSSVHTIEKSSTSRPDAYEHTQMKLFRSQRN. The chain crosses the membrane as a helical span at residues 104–124; the sequence is LYISGFSLFFWLVLRRLVTLI. The Cytoplasmic segment spans residues 125-241; the sequence is TQLAKELSNK…RLERGNKKRL (117 aa). Positions 166–233 form a coiled coil; sequence GKDEECVLEA…KEHSELQDRL (68 aa). Residues 198–223 are disordered; it reads LSKAQNDVMEMKMQSERLSKEYDQLL. A compositionally biased stretch (basic and acidic residues) spans 206 to 223; sequence MEMKMQSERLSKEYDQLL. The short motif at 238 to 241 is the Di-lysine motif element; that stretch reads KKRL.

The protein belongs to the BCAP29/BCAP31 family. In terms of assembly, homodimer. Heterodimer with BCAP31. Binds CASP8 (isoform 9) as a complex containing BCAP31, BCAP29, BCL2 and/or BCL2L1. Interacts with VAMP3, VAMP1 and membrane IgD immunoglobulins. May interact with ACTG1 and non-muscle myosin II.

The protein resides in the endoplasmic reticulum membrane. Functionally, may play a role in anterograde transport of membrane proteins from the endoplasmic reticulum to the Golgi. May be involved in CASP8-mediated apoptosis. The chain is B-cell receptor-associated protein 29 (BCAP29) from Homo sapiens (Human).